Here is a 180-residue protein sequence, read N- to C-terminus: MSQQQSNNSNDNKEQLDRVIESLNRVNSETKQIVFKMAQGMNEIEIVRSFNQKSCDLFTILINLTKKYRRENDYNVSGYKVLFENAIKIRANLPVDKFTLMILEYAPEIYERDENCFLKMTIPDKKVTLNNEFGVIRSEKFKDLWKVLVQEDKENIADEVTLLTTFAHAYLYKTLLKNSN.

The stretch at 3-33 forms a coiled coil; it reads QQQSNNSNDNKEQLDRVIESLNRVNSETKQI.

This is an uncharacterized protein from Acanthamoeba polyphaga (Amoeba).